The chain runs to 318 residues: Bifunctional protein FolD 3 (318 aa).

NADP(+) contacts are provided by residues 173–175 and Ile242; that span reads GRS.

The protein belongs to the tetrahydrofolate dehydrogenase/cyclohydrolase family. As to quaternary structure, homodimer.

The enzyme catalyses (6R)-5,10-methylene-5,6,7,8-tetrahydrofolate + NADP(+) = (6R)-5,10-methenyltetrahydrofolate + NADPH. The catalysed reaction is (6R)-5,10-methenyltetrahydrofolate + H2O = (6R)-10-formyltetrahydrofolate + H(+). It participates in one-carbon metabolism; tetrahydrofolate interconversion. Functionally, catalyzes the oxidation of 5,10-methylenetetrahydrofolate to 5,10-methenyltetrahydrofolate and then the hydrolysis of 5,10-methenyltetrahydrofolate to 10-formyltetrahydrofolate. In Rubrobacter xylanophilus (strain DSM 9941 / JCM 11954 / NBRC 16129 / PRD-1), this protein is Bifunctional protein FolD 3.